The sequence spans 129 residues: Cytochrome c' (129 aa).

Positions 12, 13, 69, 70, 119, 122, and 123 each coordinate heme c.

Post-translationally, binds 1 heme c group covalently per subunit.

In terms of biological role, cytochrome c' is the most widely occurring bacterial c-type cytochrome. Cytochromes c' are high-spin proteins and the heme has no sixth ligand. Their exact function is not known. The polypeptide is Cytochrome c' (Rubrivivax gelatinosus (Rhodocyclus gelatinosus)).